We begin with the raw amino-acid sequence, 476 residues long: Eukaryotic translation initiation factor 3 subunit L (476 aa).

In terms of domain architecture, PCI spans 257-452 (DAIRMFSHIL…DLDYALENDL (196 aa)).

The protein belongs to the eIF-3 subunit L family. As to quaternary structure, component of the eukaryotic translation initiation factor 3 (eIF-3) complex.

It localises to the cytoplasm. In terms of biological role, component of the eukaryotic translation initiation factor 3 (eIF-3) complex, which is involved in protein synthesis of a specialized repertoire of mRNAs and, together with other initiation factors, stimulates binding of mRNA and methionyl-tRNAi to the 40S ribosome. The eIF-3 complex specifically targets and initiates translation of a subset of mRNAs involved in cell proliferation. The polypeptide is Eukaryotic translation initiation factor 3 subunit L (Aspergillus niger (strain ATCC MYA-4892 / CBS 513.88 / FGSC A1513)).